The sequence spans 222 residues: Small ribosomal subunit protein uS5 (222 aa).

A disordered region spans residues 1–41; the sequence is MAEQAGAGSAQDNRGGGRDDRGGRGRRDDRGGRGGRDDREK. Residues 15-41 are compositionally biased toward basic and acidic residues; the sequence is GGGRDDRGGRGRRDDRGGRGGRDDREK. The 64-residue stretch at 44–107 folds into the S5 DRBM domain; the sequence is YLERVVTINR…EEARKNFFRV (64 aa).

It belongs to the universal ribosomal protein uS5 family. Part of the 30S ribosomal subunit. Contacts proteins S4 and S8.

In terms of biological role, with S4 and S12 plays an important role in translational accuracy. Located at the back of the 30S subunit body where it stabilizes the conformation of the head with respect to the body. The chain is Small ribosomal subunit protein uS5 from Mycolicibacterium gilvum (strain PYR-GCK) (Mycobacterium gilvum (strain PYR-GCK)).